An 878-amino-acid polypeptide reads, in one-letter code: DNA mismatch repair protein MutS (878 aa).

ATP is bound at residue 626-633 (GPNMAGKS).

It belongs to the DNA mismatch repair MutS family.

Its function is as follows. This protein is involved in the repair of mismatches in DNA. It is possible that it carries out the mismatch recognition step. This protein has a weak ATPase activity. The polypeptide is DNA mismatch repair protein MutS (Paracoccus denitrificans (strain Pd 1222)).